A 231-amino-acid polypeptide reads, in one-letter code: Response regulator MprA (231 aa).

Residues 4–118 (RILVVDDDRA…ELLARMRALL (115 aa)) form the Response regulatory domain. D48 bears the 4-aspartylphosphate mark. The segment at residues 130 to 228 (SAAMTFSDLS…VRGVGYVLRE (99 aa)) is a DNA-binding region (ompR/PhoB-type).

Phosphorylated and dephosphorylated by MprB.

The protein localises to the cytoplasm. Its function is as follows. Member of the two-component regulatory system MprB/MprA which contributes to maintaining a balance among several systems involved in stress resistance and is required for establishment and maintenance of persistent infection in the host. Functions as a transcriptional regulator that recognizes a 19-bp nucleotide motif comprizing two loosely conserved 8-bp direct DNA-binding motif repeats separated by a 3-bp spacer region. The protein is Response regulator MprA (mprA) of Mycolicibacterium vanbaalenii (strain DSM 7251 / JCM 13017 / BCRC 16820 / KCTC 9966 / NRRL B-24157 / PYR-1) (Mycobacterium vanbaalenii).